A 1317-amino-acid chain; its full sequence is ABC transporter C family member 14 (1317 aa).

The ABC transmembrane type-1 1 domain maps to 119-404 (NKYALISNIF…LPEDIYKAIG (286 aa)). 5 consecutive transmembrane segments (helical) span residues 127 to 147 (IFIT…INYI), 156 to 176 (SILK…GQSI), 249 to 269 (ILIL…VGFG), 341 to 361 (VLFW…VLVS), and 375 to 395 (LDVT…LIYL). Positions 426 to 451 (ENNQNINFNNNNNNNNNNKNNNNNDD) are disordered. A compositionally biased stretch (low complexity) spans 427–449 (NNQNINFNNNNNNNNNNKNNNNN). The region spanning 490–710 (ENEENIKINE…ISDKNDPNLI (221 aa)) is the ABC transporter 1 domain. Residue 522–529 (GVVGSGKT) participates in ATP binding. Transmembrane regions (helical) follow at residues 734-754 (YFSY…FFIG), 778-798 (DSFY…LLMI), 871-891 (LISI…LFII), 969-989 (LEVM…LFTS), and 992-1012 (GLAA…SWGV). The region spanning 744-1027 (LFITISLFFI…LEVKMNSFQR (284 aa)) is the ABC transmembrane type-1 2 domain. In terms of domain architecture, ABC transporter 2 spans 1071 to 1306 (IEFKNVEIKY…PNSKFNKLIK (236 aa)). Residue 1105 to 1112 (GRTGAGKT) coordinates ATP.

The protein belongs to the ABC transporter superfamily. ABCC family. Conjugate transporter (TC 3.A.1.208) subfamily.

The protein localises to the membrane. This Dictyostelium discoideum (Social amoeba) protein is ABC transporter C family member 14 (abcC14).